The primary structure comprises 703 residues: Polyribonucleotide nucleotidyltransferase (703 aa).

Residues aspartate 482 and aspartate 488 each coordinate Mg(2+). The KH domain occupies 549–607 (PKAQVMKIPEDKVGLVIGPAGKNIKYIKEQFGASVWIDGANAYINAPTIEAVNKAADFI). Positions 617–679 (GGVYEGKVIR…EQNRLNLCSP (63 aa)) constitute an S1 motif domain. Residues 677 to 703 (CSPDYQKPENQERPRKEQLNRKPHHRK) are disordered. The segment covering 682 to 696 (QKPENQERPRKEQLN) has biased composition (basic and acidic residues).

It belongs to the polyribonucleotide nucleotidyltransferase family. Mg(2+) serves as cofactor.

The protein resides in the cytoplasm. The enzyme catalyses RNA(n+1) + phosphate = RNA(n) + a ribonucleoside 5'-diphosphate. Its function is as follows. Involved in mRNA degradation. Catalyzes the phosphorolysis of single-stranded polyribonucleotides processively in the 3'- to 5'-direction. The polypeptide is Polyribonucleotide nucleotidyltransferase (Hydrogenobaculum sp. (strain Y04AAS1)).